We begin with the raw amino-acid sequence, 1053 residues long: Probable sucrose-phosphate synthase (1053 aa).

Positions Arg103–Val115 are enriched in basic and acidic residues. Disordered regions lie at residues Arg103–Lys127 and Leu673–Arg693.

This sequence belongs to the glycosyltransferase 1 family. In terms of assembly, homodimer or homotetramer.

The catalysed reaction is beta-D-fructose 6-phosphate + UDP-alpha-D-glucose = sucrose 6(F)-phosphate + UDP + H(+). Its pathway is glycan biosynthesis; sucrose biosynthesis; sucrose from D-fructose 6-phosphate and UDP-alpha-D-glucose: step 1/2. With respect to regulation, activity is regulated by phosphorylation and moderated by concentration of metabolites and light. Plays a role in photosynthetic sucrose synthesis by catalyzing the rate-limiting step of sucrose biosynthesis from UDP-glucose and fructose- 6-phosphate. Involved in the regulation of carbon partitioning in the leaves of plants. May regulate the synthesis of sucrose and therefore play a major role as a limiting factor in the export of photoassimilates out of the leaf. Plays a role for sucrose availability that is essential for plant growth and fiber elongation. This chain is Probable sucrose-phosphate synthase (SPS), found in Solanum tuberosum (Potato).